A 504-amino-acid chain; its full sequence is Maturase K (504 aa).

The protein belongs to the intron maturase 2 family. MatK subfamily.

The protein localises to the plastid. Its subcellular location is the chloroplast. Its function is as follows. Usually encoded in the trnK tRNA gene intron. Probably assists in splicing its own and other chloroplast group II introns. The polypeptide is Maturase K (Hamamelis virginiana (Witch-hazel)).